Reading from the N-terminus, the 95-residue chain is uncharacterized protein (95 aa).

Positions Glu-66–Gly-95 are disordered.

This sequence belongs to the herpesviridae UL91 family.

This is an uncharacterized protein from Equine herpesvirus 2 (strain 86/87) (EHV-2).